A 100-amino-acid chain; its full sequence is Apolipoprotein C-II (100 aa).

An N-terminal signal peptide occupies residues 1–22 (MGSRFLLALFLILLVLGCEVQA). The lipid binding stretch occupies residues 66–74 (SVDEKLRDM). The segment at 78–100 (SSAAMTTYASIFTDQILTLLKGE) is lipoprotein lipase cofactor.

Belongs to the apolipoprotein C2 family. In terms of processing, proapolipoprotein C-II is synthesized as a sialic acid containing glycoprotein which is subsequently desialylated prior to its proteolytic processing. Post-translationally, proapolipoprotein C-II, the major form found in plasma undergoes proteolytic cleavage of its N-terminal hexapeptide to generate the mature form apolipoprotein C-II, which occurs as the minor form in plasma.

It is found in the secreted. Component of chylomicrons, very low-density lipoproteins (VLDL), low-density lipoproteins (LDL), and high-density lipoproteins (HDL) in plasma. Plays an important role in lipoprotein metabolism as an activator of lipoprotein lipase. The chain is Apolipoprotein C-II (APOC2) from Microtus ochrogaster (Prairie vole).